Reading from the N-terminus, the 605-residue chain is Exo-beta-1,3-glucanase (605 aa).

The segment at 1–23 is disordered; the sequence is MHVPPTDPARSAPPASPHRRRRP. An N-terminal signal peptide occupies residues 1-44; sequence MHVPPTDPARSAPPASPHRRRRPKALGLTALAAAMLMAVPTTQA. Residues Gln174, 194-196, Gln217, 446-449, and 480-481 contribute to the substrate site; these read YGW, WRAD, and EH. The active-site Proton donor is the Glu502. Residue Tyr505 coordinates substrate.

The protein belongs to the glycosyl hydrolase 55 family.

Its subcellular location is the secreted. It carries out the reaction Successive hydrolysis of beta-D-glucose units from the non-reducing ends of (1-&gt;3)-beta-D-glucans, releasing alpha-glucose.. Functionally, exo-beta-1,3-glucanase that specifically hydrolyzes laminarin and laminarioligosaccharides, producing glucose and laminaribiose as end products. The polypeptide is Exo-beta-1,3-glucanase (Streptomyces sp. (strain SirexAA-E / ActE)).